Reading from the N-terminus, the 211-residue chain is WW domain-containing protein WWM1 (211 aa).

The region spanning Pro-9–Gly-43 is the WW domain. Positions Ser-32–Met-116 are disordered. Residues Lys-50 and Lys-60 each participate in a glycyl lysine isopeptide (Lys-Gly) (interchain with G-Cter in ubiquitin) cross-link. A Phosphoserine modification is found at Ser-75. A Phosphothreonine modification is found at Thr-78. Positions Gln-80–Met-116 are enriched in low complexity.

As to quaternary structure, interacts with metacaspase MCA1.

The protein localises to the cytoplasm. The protein resides in the nucleus. It localises to the mitochondrion. Its function is as follows. Involved in apoptosis. May play a role in nuclear function controlling cellular proliferation coupled to mitochondrial biogenesis. Causes impaired growth when overexpressed. The protein is WW domain-containing protein WWM1 (WWM1) of Saccharomyces cerevisiae (strain ATCC 204508 / S288c) (Baker's yeast).